The sequence spans 108 residues: Transcription factor S (108 aa).

The Zn(2+) site is built by Cys5, Cys8, Cys21, Cys24, Cys69, Cys72, Cys97, and Cys100. Residues 5-24 form a C4-type zinc finger; sequence CPKCNNLMLPKDGKLKCAVC. A TFIIS-type zinc finger spans residues 65–105; sequence TRIECPKCGHNEAYWWLQQTRCADEPETRFYKCKKCGHTWR.

This sequence belongs to the archaeal RpoM/eukaryotic RPA12/RPB9/RPC11 RNA polymerase family.

Induces RNA cleavage activity in the RNA polymerase. In its presence, the cleavage activity of the RNA polymerase truncates the RNA back to position +15 in a stepwise manner by releasing mainly dinucleotides from the 3'-end of the nascent RNA. The truncated RNAs are able to continue elongation. Involved in transcriptional proofreading and fidelity. Misincorporation of nucleotides during elongation of transcription leads to arrested elongation complexes which are rescued by TFS-promoted removal of a dinucleotide from the 3'-end. TFS is able to induce a cleavage resynthesis cycle in stalled elongation complexes (resulting from the next missing nucleotide or a reduced incorporation rate of a wrong nucleotide) preventing misincorporation and enabling proofreading in a post-incorporation manner. Pausing of elongation complexes is the main determinant of TFS-induced RNA cleavage. The protein is Transcription factor S of Methanocaldococcus jannaschii (strain ATCC 43067 / DSM 2661 / JAL-1 / JCM 10045 / NBRC 100440) (Methanococcus jannaschii).